Reading from the N-terminus, the 348-residue chain is tRNA N6-adenosine threonylcarbamoyltransferase (348 aa).

His-116 and His-120 together coordinate Fe cation. Substrate-binding positions include 138-142 (QVSGG), Asp-171, Gly-184, Asp-188, and Asn-277. Asp-309 lines the Fe cation pocket.

Belongs to the KAE1 / TsaD family. It depends on Fe(2+) as a cofactor.

It is found in the cytoplasm. The catalysed reaction is L-threonylcarbamoyladenylate + adenosine(37) in tRNA = N(6)-L-threonylcarbamoyladenosine(37) in tRNA + AMP + H(+). Required for the formation of a threonylcarbamoyl group on adenosine at position 37 (t(6)A37) in tRNAs that read codons beginning with adenine. Is involved in the transfer of the threonylcarbamoyl moiety of threonylcarbamoyl-AMP (TC-AMP) to the N6 group of A37, together with TsaE and TsaB. TsaD likely plays a direct catalytic role in this reaction. The protein is tRNA N6-adenosine threonylcarbamoyltransferase of Lactobacillus gasseri (strain ATCC 33323 / DSM 20243 / BCRC 14619 / CIP 102991 / JCM 1131 / KCTC 3163 / NCIMB 11718 / NCTC 13722 / AM63).